The following is a 194-amino-acid chain: PPE family protein PPE41 (194 aa).

This sequence belongs to the mycobacterial PPE family. Forms a heterodimer with PE25. The dimer forms a 1:1:1 heterotrimeric complex with EspG5. PPE41 interacts directly with EspG5.

The protein localises to the secreted. The protein resides in the cell surface. In terms of biological role, the PE25/PPE41 dimer induces both a strong humoral and cellular immune response. The dimer induces necrosis, but not apoptosis, in mouse macrophage cells. It also induces activation and maturation of mouse dendritic cells and drives Th2-biased immune responses. The sequence is that of PPE family protein PPE41 from Mycobacterium tuberculosis (strain ATCC 25618 / H37Rv).